Reading from the N-terminus, the 96-residue chain is Transcription and mRNA export factor SUS1 (96 aa).

Belongs to the ENY2 family. Component of the nuclear pore complex (NPC)-associated TREX-2 complex (transcription and export complex 2), composed of at least SUS1, SAC3, THP1, SEM1, and CDC31. TREX-2 contains 2 SUS1 chains. The TREX-2 complex interacts with the nucleoporin NUP1. Component of the 1.8 MDa SAGA transcription coactivator-HAT complex. SAGA is built of 5 distinct domains with specialized functions. Within the SAGA complex, SUS1, SGF11, SGF73 and UBP8 form an additional subcomplex of SAGA called the DUB module (deubiquitination module). Interacts directly with THP1, SAC3, SGF11, and with the RNA polymerase II.

Its subcellular location is the nucleus. The protein localises to the nucleoplasm. The protein resides in the cytoplasm. It localises to the P-body. In terms of biological role, involved in mRNA export coupled transcription activation by association with both the TREX-2 and the SAGA complexes. At the promoters, SAGA is required for recruitment of the basal transcription machinery. It influences RNA polymerase II transcriptional activity through different activities such as TBP interaction and promoter selectivity, interaction with transcription activators, and chromatin modification through histone acetylation and deubiquitination. Within the SAGA complex, participates in a subcomplex required for deubiquitination of H2B and for the maintenance of steady-state H3 methylation levels. The TREX-2 complex functions in docking export-competent ribonucleoprotein particles (mRNPs) to the nuclear entrance of the nuclear pore complex (nuclear basket). TREX-2 participates in mRNA export and accurate chromatin positioning in the nucleus by tethering genes to the nuclear periphery. May also be involved in cytoplasmic mRNA decay by interaction with components of P-bodies. This is Transcription and mRNA export factor SUS1 from Kluyveromyces lactis (strain ATCC 8585 / CBS 2359 / DSM 70799 / NBRC 1267 / NRRL Y-1140 / WM37) (Yeast).